Reading from the N-terminus, the 134-residue chain is UPF0412 protein YaaI (134 aa).

An N-terminal signal peptide occupies residues 1-23 (MKSVFTLSASLAISLLLCCTAQA).

The protein belongs to the UPF0412 family.

The chain is UPF0412 protein YaaI from Escherichia coli O7:K1 (strain IAI39 / ExPEC).